The following is a 328-amino-acid chain: NADH-quinone oxidoreductase subunit H 2 (328 aa).

Transmembrane regions (helical) follow at residues 3–23, 77–97, 119–139, 165–185, 191–211, 250–270, 272–292, and 307–327; these read LIVA…ILLL, FLFK…FAAI, VALL…IFGG, MGFA…LDIV, VWNV…GLAE, MVLV…GVLI, LPPL…FMWF, and IGWK…GVVF.

Belongs to the complex I subunit 1 family. NDH-1 is composed of 14 different subunits. Subunits NuoA, H, J, K, L, M, N constitute the membrane sector of the complex.

The protein localises to the cell inner membrane. It catalyses the reaction a quinone + NADH + 5 H(+)(in) = a quinol + NAD(+) + 4 H(+)(out). In terms of biological role, NDH-1 shuttles electrons from NADH, via FMN and iron-sulfur (Fe-S) centers, to quinones in the respiratory chain. The immediate electron acceptor for the enzyme in this species is believed to be ubiquinone. Couples the redox reaction to proton translocation (for every two electrons transferred, four hydrogen ions are translocated across the cytoplasmic membrane), and thus conserves the redox energy in a proton gradient. This subunit may bind ubiquinone. The sequence is that of NADH-quinone oxidoreductase subunit H 2 from Rhizobium meliloti (strain 1021) (Ensifer meliloti).